Reading from the N-terminus, the 245-residue chain is Terpene cyclase prhH (245 aa).

7 consecutive transmembrane segments (helical) span residues 17-37 (ILAISEVLKVVAAVGWSVNYI), 51-71 (IGILPLCCDIGWEFVYAWMFP), 76-96 (HWQGVVRVWFFLHSAVLLVTL), 113-133 (IVFIYIFVTLVFGAGQYALAA), 138-158 (ALGFHWGGALCQFLSSSCGIA), 170-190 (SYLIWFARAISTFAGFIKLCI), and 205-225 (PMCWFYIVTVLSFDAAYPFLY).

It belongs to the paxB family.

Its subcellular location is the membrane. Its pathway is secondary metabolite biosynthesis; terpenoid biosynthesis. Terpene cyclase; part of the gene cluster that mediates the biosynthesis of paraherquonin, a meroterpenoid with a unique, highly congested hexacyclic molecular architecture. The first step of the pathway is the synthesis of 3,5-dimethylorsellinic acid (DMOA) by the polyketide synthase prhL. Synthesis of DMOA is followed by farnesylation by the prenyltransferase prhE, methylesterification by the methyl-transferase prhM, epoxidation of the prenyl chain by the flavin-dependent monooxygenase prhF, and cyclization of the farnesyl moiety by the terpene cyclase prhH, to yield the tetracyclic intermediate, protoaustinoid A. The short chain dehydrogenase prhI then oxidizes the C-3 alcohol group of the terpene cyclase product to transform protoaustinoid A into protoaustinoid B. The FAD-binding monooxygenase prhJ catalyzes the oxidation of protoaustinoid B into preaustinoid A which is further oxidized into preaustinoid A1 by FAD-binding monooxygenase phrK. Finally, prhA leads to berkeleydione via the berkeleyone B intermediate. PrhA is a multifunctional dioxygenase that first desaturates at C5-C6 to form berkeleyone B, followed by rearrangement of the A/B-ring to form the cycloheptadiene moiety in berkeleydione. Berkeleydione serves as the key intermediate for the biosynthesis of paraherquonin as well as many other meroterpenoids. The cytochrome P450 monooxygenases prhB, prhD, and prhN, as well as the isomerase prhC, are probably involved in the late stage of paraherquonin biosynthesis, after the production of berkeleydione. Especially prhC might be a multifunctional enzyme that catalyzes the D-ring expansion via intramolecular methoxy rearrangement, as well as the hydrolysis of the expanded D-ring. This Penicillium brasilianum protein is Terpene cyclase prhH.